Reading from the N-terminus, the 207-residue chain is Protein lin-7 homolog B (207 aa).

A Kinase interacting site motif is present at residues 1–13 (MAALVEPLGLERD). Positions 10-65 (LERDVSRAVELLERLQRSGELPPQKLQALQRVLQSRFCSAIREVYEQLYDTLDITG) constitute an L27 domain. Residues 93–175 (VVELPKTDEG…SVKLVVRYTP (83 aa)) form the PDZ domain. Residues 187–207 (KMRSARRRQQHHSYSSLESRG) are disordered. Residues 198-207 (HSYSSLESRG) are compositionally biased toward polar residues.

This sequence belongs to the lin-7 family. As to quaternary structure, forms two exclusive ternary complexes with CASK and CASKIN1. The brain-specific heterotrimeric complex (LIN-10-LIN-2-LIN-7 complex) composed of at least APBA1, CASK, and LIN7, associates with the motor protein KIF17 to transport vesicles along microtubules. Forms a heterotrimeric complex composed of MMP5, LIN7B and PATJ; the N-terminal L27 domain of PALS1 interacts with the L27 domain of PATJ and the C-terminal L27 domain of PALS1 interacts with the L27 domain of LIN7B. Forms a heterotrimeric complex with DLG1 and CASK via their L27 domains. Interacts with DLG4 and GRIN2B as well as CDH1 and CTNNB1, the channels KCNJ12/Kir2.2, KCNJ4/Kir2.3 and probably KCNJ2/Kir2.1 and SLC6A12/BGT-1 via its PDZ domain. The association of LIN7A with cadherin and beta-catenin is calcium-dependent, occurs at synaptic junctions and requires the actin cytoskeleton. Interacts with EGFR, ERBB2, ERBB3 and ERBB4 with both PDZ and KID domains. Associates with KIF17 via APBA1. Interacts with ASIC3. Interacts with TOPK. Interacts with RTKN. Interacts with APBA1. Interacts with MPP7. Interacts with DLG2. Interacts with DLG3. Expressed only in brain.

The protein resides in the cell membrane. It localises to the basolateral cell membrane. The protein localises to the cell junction. It is found in the postsynaptic density membrane. Its subcellular location is the tight junction. Its function is as follows. Plays a role in establishing and maintaining the asymmetric distribution of channels and receptors at the plasma membrane of polarized cells. Forms membrane-associated multiprotein complexes that may regulate delivery and recycling of proteins to the correct membrane domains. The tripartite complex composed of LIN7 (LIN7A, LIN7B or LIN7C), CASK and APBA1 associates with the motor protein KIF17 to transport vesicles containing N-methyl-D-aspartate (NMDA) receptor subunit NR2B along microtubules. This complex may have the potential to couple synaptic vesicle exocytosis to cell adhesion in brain. Ensures the proper localization of GRIN2B (subunit 2B of the NMDA receptor) to neuronal postsynaptic density and may function in localizing synaptic vesicles at synapses where it is recruited by beta-catenin and cadherin. Required to localize Kir2 channels, GABA transporter (SLC6A12) and EGFR/ERBB1, ERBB2, ERBB3 and ERBB4 to the basolateral membrane of epithelial cells. May increase the amplitude of ASIC3 acid-evoked currents by stabilizing the channel at the cell surface. This chain is Protein lin-7 homolog B (Lin7b), found in Rattus norvegicus (Rat).